We begin with the raw amino-acid sequence, 174 residues long: C-type lectin domain family 2 member A (174 aa).

The Cytoplasmic segment spans residues 1–27 (MINPELRDGRADGFIHRIVPKLIQNWK). A helical; Signal-anchor for type II membrane protein transmembrane segment spans residues 28–48 (IGLMCFLSIIITTVCIIMIAT). The Extracellular segment spans residues 49 to 174 (WSKHAKPVAC…WICSKPKYFL (126 aa)). Cysteine 58 and cysteine 69 are disulfide-bonded. The C-type lectin domain occupies 65–174 (VRDKCFYFSD…WICSKPKYFL (110 aa)). 3 N-linked (GlcNAc...) asparagine glycosylation sites follow: asparagine 78, asparagine 130, and asparagine 143. Cysteines 86 and 167 form a disulfide.

In terms of assembly, homodimer; non-disulfide-linked. Interacts with KLRB1. Interacts with KLRF2. In terms of processing, N-glycosylated. As to expression, mainly expressed in skin. Also expressed in keratinocytes, spleen, thymus, small intestine, peripheral blood monocytes, bone marrow, ovary, testis and skin. High expression in CD8(+), B-lymphocytes and naive CD4(+) T-cells. Restricted mostly to proliferating lymphocytes. Not detected in myeloid leukocytes or natural killer (NK) cells.

The protein resides in the cell membrane. Functionally, membrane-bound protein expressed mainly on keratinocytes which acts as a ligand to stimulate the activating receptor NKp65/KLRF2, expressed on the surface of natural killer (NK) cells. Facilitates thereby dedicated immune recognition of keratinocytes leading to natural killer cell mediated cytotoxicity. Also plays a role in modulating the extent of T-cell expansion. This is C-type lectin domain family 2 member A (CLEC2A) from Homo sapiens (Human).